Here is a 224-residue protein sequence, read N- to C-terminus: LexA repressor (224 aa).

Residues 38–58 (IREIGDAVGLTSTSSVAHQLR) constitute a DNA-binding region (H-T-H motif). Over residues 71–82 (NRPRAVDVRGID) the composition is skewed to basic and acidic residues. Residues 71–96 (NRPRAVDVRGIDDAGTPSATTDVIGS) form a disordered region. Active-site for autocatalytic cleavage activity residues include S148 and K185.

It belongs to the peptidase S24 family. In terms of assembly, homodimer.

The catalysed reaction is Hydrolysis of Ala-|-Gly bond in repressor LexA.. Its function is as follows. Represses a number of genes involved in the response to DNA damage (SOS response), including recA and lexA. In the presence of single-stranded DNA, RecA interacts with LexA causing an autocatalytic cleavage which disrupts the DNA-binding part of LexA, leading to derepression of the SOS regulon and eventually DNA repair. This chain is LexA repressor, found in Mycobacteroides abscessus (strain ATCC 19977 / DSM 44196 / CCUG 20993 / CIP 104536 / JCM 13569 / NCTC 13031 / TMC 1543 / L948) (Mycobacterium abscessus).